Consider the following 348-residue polypeptide: Keratocan (348 aa).

The first 26 residues, 1–26, serve as a signal peptide directing secretion; the sequence is MSRLNLTMEVLLVAFVAVFLTSQVHS. The region spanning 40 to 69 is the LRRNT domain; it reads ACPKECNCPPNFPNAVYCDNKGLKSIPVIP. 2 cysteine pairs are disulfide-bonded: Cys41/Cys47 and Cys45/Cys57. 10 LRR repeats span residues 70-92, 93-118, 119-140, 141-163, 165-189, 190-213, 215-234, 235-260, 262-280, and 281-303; these read PYTW…ALRN, ATQL…ALRA, MSNL…SPLP, AKLE…VFSG, GHLT…SLKG, LNNL…LPPT, TQIF…YFKG, LPKV…VFNL, SILD…PVIS, and SGLE…DICP. An N-linked (GlcNAc...) (keratan sulfate) asparagine glycan is attached at Asn92. Asn259 carries an N-linked (GlcNAc...) (keratan sulfate) asparagine glycan. Residue Asn297 is glycosylated (N-linked (GlcNAc...) asparagine). The cysteines at positions 302 and 339 are disulfide-linked.

The protein belongs to the small leucine-rich proteoglycan (SLRP) family. SLRP class II subfamily. In terms of processing, glycosylated. Contains keratan sulfate chains. In terms of tissue distribution, expressed in eye, where it is found in the corneal epithelial layer and to a lesser extent in the stromal layer (at protein level).

It is found in the secreted. The protein localises to the extracellular space. Its subcellular location is the extracellular matrix. In terms of biological role, may be important in developing and maintaining corneal transparency and for the structure of the stromal matrix. This chain is Keratocan, found in Danio rerio (Zebrafish).